A 327-amino-acid polypeptide reads, in one-letter code: MAMTAEVKDELSRLTVSQVSSRKAELSALLRFAGGLHIVGGRVIVEAEVDMGSIARRLRREIFELYGYGSDVHVLGAGGLRKTSRYVVRVSKEGEALARQTGLLDVRGRPVRGLPAQVVGGSIADAEAAWRGAFLAHGSLTEPGRSSALEVSCPGPEAALALVGAARRLGITAKAREVRGTDRVVVRDGEAIGALLTRMGAQDTRLTWEERRMRREVRATANRLANFDDANLRRSARAAVAAAARVERALEILGEDVPDHLAAAGKLRVQHRQASLEELGQLADPPMTKDAVAGRIRRLLSMADRRARELGIPDTESAVTAELLDEA.

Positions 275-308 (SLEELGQLADPPMTKDAVAGRIRRLLSMADRRAR) form a DNA-binding region, H-T-H motif.

The protein belongs to the WhiA family.

Involved in cell division and chromosome segregation. In Nocardia farcinica (strain IFM 10152), this protein is Probable cell division protein WhiA.